The sequence spans 327 residues: Aquaporin-1 (327 aa).

Positions 1-34 are disordered; sequence MSSNDSNDTDKQHTRLDPTGVDDAYIPPEQPETK. Over 1–48 the chain is Cytoplasmic; that stretch reads MSSNDSNDTDKQHTRLDPTGVDDAYIPPEQPETKHHRFKISKDTLRNH. Residues 49 to 69 traverse the membrane as a helical segment; sequence FIAAAGEFCGTFMFLWCAYVI. Topologically, residues 70-91 are extracellular; the sequence is CNVANHDVALVAAPDGSHPGQL. Residues 92 to 112 form a helical membrane-spanning segment; sequence IMIAIGFGFSVMFSIWCFAGV. At 113–136 the chain is on the cytoplasmic side; the sequence is SGGALNPAVSLSLCLARAVSPTRC. The short motif at 118–120 is the NPA 1 element; that stretch reads NPA. The helical transmembrane segment at 137-157 threads the bilayer; the sequence is VVMWVSQIVAGMAAGGAASAM. The Extracellular segment spans residues 158–176; that stretch reads TPGEVLFANSLGLGCSRTR. The chain crosses the membrane as a helical span at residues 177 to 197; sequence GLFLEMFGTAILCLTVLMTAV. Over 198 to 203 the chain is Cytoplasmic; that stretch reads EKRETN. Residues 204-224 traverse the membrane as a helical segment; that stretch reads FMAALPIGISLFIAHVALTAY. The Extracellular portion of the chain corresponds to 225-248; the sequence is TGTGVNPARSLGAAVAARYFPHYH. The NPA 2 signature appears at 230 to 232; it reads NPA. A helical membrane pass occupies residues 249-269; the sequence is WIYWIGPLLGSILAWSVWQLL. The Cytoplasmic segment spans residues 270-327; it reads QILDYTTYVTAEKAASTKEKAQKKVKPAVPLLWLKSNFSLLFFISRSLALNVIIFGKN.

This sequence belongs to the MIP/aquaporin (TC 1.A.8) family.

It localises to the endoplasmic reticulum membrane. Its subcellular location is the cell membrane. Functionally, water channel required to facilitate the transport of water across membranes. Involved in sporulation, freeze tolerance and osmotolerance. Is non-functional in most laboratory strains. The sequence is that of Aquaporin-1 (AQY1) from Saccharomyces cerevisiae (strain Lalvin EC1118 / Prise de mousse) (Baker's yeast).